Reading from the N-terminus, the 108-residue chain is Vacuolar ATPase assembly integral membrane protein VMA21 (108 aa).

Residues 1–34 are Cytoplasmic-facing; it reads MASRRSAAAKKEDFSFEAAATQSAHEAQEGFPSS. A helical transmembrane segment spans residues 35–55; the sequence is VIIKLVLVTVAMICAPLGTYF. Residues 56 to 68 are Lumenal-facing; the sequence is GTLNTICGGDSSY. A helical transmembrane segment spans residues 69 to 89; sequence AGALAAISVNVVLIIYLIIAA. Residues 90 to 108 lie on the Cytoplasmic side of the membrane; it reads REDTGESEEERKGKEGKEE.

It belongs to the VMA21 family.

Its subcellular location is the endoplasmic reticulum membrane. The protein resides in the endoplasmic reticulum-Golgi intermediate compartment membrane. It localises to the cytoplasmic vesicle. The protein localises to the COPII-coated vesicle membrane. Its function is as follows. Required for the assembly of the V0 complex of the vacuolar ATPase (V-ATPase) in the endoplasmic reticulum. The protein is Vacuolar ATPase assembly integral membrane protein VMA21 of Ajellomyces capsulatus (strain NAm1 / WU24) (Darling's disease fungus).